Reading from the N-terminus, the 415-residue chain is SVF1-like protein YDR222W (415 aa).

It belongs to the SVF1 family.

The protein resides in the cytoplasm. This Saccharomyces cerevisiae (strain ATCC 204508 / S288c) (Baker's yeast) protein is SVF1-like protein YDR222W.